Consider the following 459-residue polypeptide: Putrescine aminotransferase (459 aa).

Pyridoxal 5'-phosphate is bound by residues 150–151 and Gln274; that span reads GT. Residue Lys300 is modified to N6-(pyridoxal phosphate)lysine. Pyridoxal 5'-phosphate is bound at residue Thr332.

The protein belongs to the class-III pyridoxal-phosphate-dependent aminotransferase family. Putrescine aminotransferase subfamily. The cofactor is pyridoxal 5'-phosphate.

It carries out the reaction an alkane-alpha,omega-diamine + 2-oxoglutarate = an omega-aminoaldehyde + L-glutamate. The enzyme catalyses putrescine + 2-oxoglutarate = 1-pyrroline + L-glutamate + H2O. The catalysed reaction is cadaverine + 2-oxoglutarate = 5-aminopentanal + L-glutamate. It functions in the pathway amine and polyamine degradation; putrescine degradation; 4-aminobutanal from putrescine (transaminase route): step 1/1. Catalyzes the aminotransferase reaction from putrescine to 2-oxoglutarate, leading to glutamate and 4-aminobutanal, which spontaneously cyclizes to form 1-pyrroline. This is the first step in one of two pathways for putrescine degradation, where putrescine is converted into 4-aminobutanoate (gamma-aminobutyrate or GABA) via 4-aminobutanal. Also functions as a cadaverine transaminase in a a L-lysine degradation pathway to succinate that proceeds via cadaverine, glutarate and L-2-hydroxyglutarate. This is Putrescine aminotransferase from Escherichia coli O17:K52:H18 (strain UMN026 / ExPEC).